The following is a 380-amino-acid chain: Cytochrome b (380 aa).

The next 4 membrane-spanning stretches (helical) occupy residues 34–54 (FGSLLGICLLTQILTGLLLAT), 78–99 (WLIRNLHANGASFFFICIYLHI), 114–134 (WNTGVILLLALMATAFVGYVL), and 179–199 (FFALHFLLPFMIAGLAFIHLT). Positions 84 and 98 each coordinate heme b. The heme b site is built by His-183 and His-197. His-202 serves as a coordination point for a ubiquinone. A run of 4 helical transmembrane segments spans residues 227-247 (LKDILGFIIMFLPLTTLALFS), 289-309 (LGGVLALAASVLVLFLTPLLH), 321-341 (LSQLLFWTLVANLLILTWVGS), and 348-368 (FIIIGQLASLAYFTILLLLFP).

This sequence belongs to the cytochrome b family. In terms of assembly, the cytochrome bc1 complex contains 11 subunits: 3 respiratory subunits (MT-CYB, CYC1 and UQCRFS1), 2 core proteins (UQCRC1 and UQCRC2) and 6 low-molecular weight proteins (UQCRH/QCR6, UQCRB/QCR7, UQCRQ/QCR8, UQCR10/QCR9, UQCR11/QCR10 and a cleavage product of UQCRFS1). This cytochrome bc1 complex then forms a dimer. It depends on heme b as a cofactor.

The protein resides in the mitochondrion inner membrane. Functionally, component of the ubiquinol-cytochrome c reductase complex (complex III or cytochrome b-c1 complex) that is part of the mitochondrial respiratory chain. The b-c1 complex mediates electron transfer from ubiquinol to cytochrome c. Contributes to the generation of a proton gradient across the mitochondrial membrane that is then used for ATP synthesis. This Uria lomvia (Thick-billed murre) protein is Cytochrome b (MT-CYB).